The following is a 116-amino-acid chain: Somatostatin (116 aa).

Residues 1–24 (MLSCRLQCALAALSIVLALGGVTG) form the signal peptide. The propeptide occupies 25-88 (APSDPRLRQF…QDEMRLELQR (64 aa)). A43 is modified (alanine amide). Residues 62-99 (QTENDALEPEDLSQAAEQDEMRLELQRSANSNPAMAPR) are disordered. Residues C105 and C116 are joined by a disulfide bond.

This sequence belongs to the somatostatin family. Post-translationally, C-terminal amidation of the neuronostatin peptide is required for its biological activity, including for the regulation of mean arterial pressure. As to expression, expressed in the pancreas and the spleen (at protein level).

It localises to the secreted. Its function is as follows. Inhibits the secretion of pituitary hormones, including that of growth hormone/somatotropin (GH1), PRL, ACTH, luteinizing hormone (LH) and TSH. Also impairs ghrelin- and GnRH-stimulated secretion of GH1 and LH; the inhibition of ghrelin-stimulated secretion of GH1 can be further increased by neuronostatin. May enhance low-glucose-induced glucagon release by pancreatic alpha cells. This effect may be mediated by binding to GPR107 and PKA activation. May regulate cardiac contractile function. May compromise cardiomyocyte viability. In the central nervous system, may impair memory retention and may affect hippocampal excitability. May also have anxiolytic and anorexigenic effects. May play a role in arterial pressure regulation. May inhibit basal, but not ghrelin- or GnRH-stimulated secretion of GH1 or LH, but does not affect the release of other pituitary hormones, including PRL, ACTH, FSH or TSH. Potentiates inhibitory action of somatostatin on ghrelin-stimulated secretion of GH1, but not that on GnRH-stimulated secretion of LH. This Sus scrofa (Pig) protein is Somatostatin (SST).